The primary structure comprises 447 residues: MNKNTWIIGFTLFAMFFGAGNLIFPTQLGLESGHFFWPAILAFALTGIGLPLLGVVVGALDKHGYIGSFNKISPRFSLIFLIIIYLTIGPLFAIPRTASTSFEMTVTPIAHNSGNLALFIFTVIYFLIVLYLCLNPNKMIDRIGSLLTPLLLITIVAMIIKGFVDFGGHSSNYGMTNAYHSNLSGFSQGFTQGYLTMDAIASIAFSMIVVNAIKTTGIQHADKIFKQTIIAGLIAAIALVFIYISLGYIGNHINIPSDTLKELKAKDQNIGTYLLTTMATKGFGTFGKYLLGIIVSLACLTTACGLIVSVSEYFHRIIPKIPYKVFVVFFILVSFILANQGLNSVIKMSVPVLSVIYPVAITVILLILIARFIPTKRIAQQIPLIIVAIESILSLITTQGWIRISLIDSLPLKEYSLEWFPIAVVATLVGYMISYFVKQSNIVYQKE.

12 helical membrane passes run 5-25, 40-60, 74-94, 114-134, 143-163, 193-213, 229-249, 290-310, 317-337, 350-370, 382-402, and 417-437; these read TWII…LIFP, ILAF…VGAL, PRFS…LFAI, GNLA…YLCL, IGSL…IKGF, GYLT…VNAI, IIAG…LGYI, LLGI…IVSV, IIPK…SFIL, VPVL…ILIA, IPLI…QGWI, and LEWF…SYFV.

It belongs to the branched chain amino acid transporter family.

The protein localises to the cell membrane. In terms of biological role, component of the transport system for branched-chain amino acids (leucine, isoleucine and valine), which is coupled to a proton motive force. In Staphylococcus epidermidis (strain ATCC 35984 / DSM 28319 / BCRC 17069 / CCUG 31568 / BM 3577 / RP62A), this protein is Putative branched-chain amino acid carrier protein SERP0977.